We begin with the raw amino-acid sequence, 247 residues long: tRNA (guanine-N(1)-)-methyltransferase (247 aa).

S-adenosyl-L-methionine contacts are provided by residues G115 and 135 to 140 (IGDYVL).

This sequence belongs to the RNA methyltransferase TrmD family. As to quaternary structure, homodimer.

It is found in the cytoplasm. The enzyme catalyses guanosine(37) in tRNA + S-adenosyl-L-methionine = N(1)-methylguanosine(37) in tRNA + S-adenosyl-L-homocysteine + H(+). Specifically methylates guanosine-37 in various tRNAs. In Alkaliphilus metalliredigens (strain QYMF), this protein is tRNA (guanine-N(1)-)-methyltransferase.